A 311-amino-acid polypeptide reads, in one-letter code: MTIRLLGRTEIRHLAKSIDFRPRKSFGQNFVHDANTVRRIVSASSINRSDHVLEVGPGLGSLTLALLDRGAKVTAVEIDPVLANQLPTTIAAHSHSEVNRLTVLNRDILTFKQSDMTEMPTALVANLPYNVAVPALLHLLAEFPSIRTVMVMVQAEVAERLAAEPGGKDYGVPSAKVRFFGNVRRYGMVSPTVFWPIPRVYSGLVRIDRYETSPWPTDPEFRQQVFELIDVAFAQRRKTSRNAFAEWAGSGNESASRLLAASIDPSRRGETLSINDFVRLLQRSADWHVVPKPESAATAVATDEDAQVPTL.

6 residues coordinate S-adenosyl-L-methionine: Asn-29, Val-31, Gly-56, Glu-77, Asp-107, and Asn-126.

This sequence belongs to the class I-like SAM-binding methyltransferase superfamily. rRNA adenine N(6)-methyltransferase family. RsmA subfamily.

The protein resides in the cytoplasm. The enzyme catalyses adenosine(1518)/adenosine(1519) in 16S rRNA + 4 S-adenosyl-L-methionine = N(6)-dimethyladenosine(1518)/N(6)-dimethyladenosine(1519) in 16S rRNA + 4 S-adenosyl-L-homocysteine + 4 H(+). Its function is as follows. Specifically dimethylates two adjacent adenosines (A1518 and A1519) in the loop of a conserved hairpin near the 3'-end of 16S rRNA in the 30S particle. May play a critical role in biogenesis of 30S subunits. This is Ribosomal RNA small subunit methyltransferase A from Mycolicibacterium vanbaalenii (strain DSM 7251 / JCM 13017 / BCRC 16820 / KCTC 9966 / NRRL B-24157 / PYR-1) (Mycobacterium vanbaalenii).